A 51-amino-acid chain; its full sequence is MKMKTNKYMNMVRPAPPRRADPEGVRDPSTMGGGPNPFLRRSPYMYINKKK.

The segment at 1 to 42 is disordered; it reads MKMKTNKYMNMVRPAPPRRADPEGVRDPSTMGGGPNPFLRRS.

The protein localises to the mitochondrion. This is an uncharacterized protein from Saccharomyces cerevisiae (strain ATCC 204508 / S288c) (Baker's yeast).